The chain runs to 876 residues: Alanine--tRNA ligase (876 aa).

The Zn(2+) site is built by histidine 562, histidine 566, cysteine 666, and histidine 670.

The protein belongs to the class-II aminoacyl-tRNA synthetase family. Zn(2+) is required as a cofactor.

Its subcellular location is the cytoplasm. It catalyses the reaction tRNA(Ala) + L-alanine + ATP = L-alanyl-tRNA(Ala) + AMP + diphosphate. In terms of biological role, catalyzes the attachment of alanine to tRNA(Ala) in a two-step reaction: alanine is first activated by ATP to form Ala-AMP and then transferred to the acceptor end of tRNA(Ala). Also edits incorrectly charged Ser-tRNA(Ala) and Gly-tRNA(Ala) via its editing domain. This is Alanine--tRNA ligase from Hahella chejuensis (strain KCTC 2396).